Here is a 247-residue protein sequence, read N- to C-terminus: Cell division protein ZapD (247 aa).

Belongs to the ZapD family. Interacts with FtsZ.

The protein localises to the cytoplasm. Its function is as follows. Cell division factor that enhances FtsZ-ring assembly. Directly interacts with FtsZ and promotes bundling of FtsZ protofilaments, with a reduction in FtsZ GTPase activity. This chain is Cell division protein ZapD, found in Cronobacter sakazakii (strain ATCC BAA-894) (Enterobacter sakazakii).